A 344-amino-acid polypeptide reads, in one-letter code: tRNA N6-adenosine threonylcarbamoyltransferase (344 aa).

Fe cation-binding residues include H110 and H114. Substrate is bound by residues 133–137 (AVSGA), D166, G179, and N278. D303 is a Fe cation binding site.

This sequence belongs to the KAE1 / TsaD family. It depends on Fe(2+) as a cofactor.

The protein resides in the cytoplasm. It carries out the reaction L-threonylcarbamoyladenylate + adenosine(37) in tRNA = N(6)-L-threonylcarbamoyladenosine(37) in tRNA + AMP + H(+). Required for the formation of a threonylcarbamoyl group on adenosine at position 37 (t(6)A37) in tRNAs that read codons beginning with adenine. Is involved in the transfer of the threonylcarbamoyl moiety of threonylcarbamoyl-AMP (TC-AMP) to the N6 group of A37, together with TsaE and TsaB. TsaD likely plays a direct catalytic role in this reaction. The chain is tRNA N6-adenosine threonylcarbamoyltransferase from Chlamydia caviae (strain ATCC VR-813 / DSM 19441 / 03DC25 / GPIC) (Chlamydophila caviae).